A 3960-amino-acid polypeptide reads, in one-letter code: Replicase polyprotein 1ab (3960 aa).

The segment at cysteine 8–cysteine 28 adopts a C4-type; atypical zinc-finger fold. Residues glutamate 69–methionine 180 enclose the Peptidase C31 domain. The interval glutamate 69–threonine 182 is PCP1-alpha. Residues cysteine 76 and histidine 146 each act as for Nsp1-alpha papain-like cysteine proteinase activity in the active site. Positions valine 199 to serine 200 are important for host EIF2AK2 inhibition. Residues aspartate 263–tyrosine 382 are PCP1-beta. A Peptidase C32 domain is found at aspartate 263–glycine 383. Residues cysteine 270 and histidine 339 each act as for Nsp1-beta papain-like cysteine proteinase activity in the active site. The OTU-like stretch occupies residues leucine 426 to proline 513. Positions histidine 428 to leucine 535 constitute a Peptidase C33 domain. Catalysis depends on for Nsp2 cysteine proteinase activity residues cysteine 437 and histidine 506. 3 disordered regions span residues arginine 809–serine 882, threonine 899–glycine 979, and proline 1156–proline 1213. Over residues tryptophan 810–valine 819 the composition is skewed to pro residues. Transmembrane regions (helical) follow at residues leucine 1266–phenylalanine 1286, glycine 1296–valine 1316, serine 1345–alanine 1365, isoleucine 1368–valine 1388, leucine 1583–valine 1603, alanine 1650–isoleucine 1670, cysteine 1685–phenylalanine 1705, and isoleucine 1719–valine 1739. The segment at leucine 1266–valine 1388 is HD1. Positions leucine 1583–tryptophan 1745 are HD2. The Peptidase S32 domain occupies glycine 1810–glutamate 2013. Catalysis depends on charge relay system; for 3C-like serine proteinase activity residues histidine 1848, aspartate 1873, and serine 1927. Helical transmembrane passes span leucine 2012 to methionine 2032, phenylalanine 2060 to isoleucine 2080, tryptophan 2092 to threonine 2112, serine 2137 to phenylalanine 2157, and histidine 2164 to glycine 2184. The tract at residues tryptophan 2036–phenylalanine 2157 is HD3. Residues proline 2329–aspartate 2358 form a disordered region. Positions threonine 2330 to proline 2344 are enriched in pro residues. In terms of domain architecture, NiRAN spans isoleucine 2488–glycine 2650. Positions glycine 2889–tyrosine 3023 constitute a RdRp catalytic domain. Positions glycine 3144–leucine 3207 constitute an AV ZBD domain. Positions 3150, 3153, 3163, 3168, 3171, 3173, 3175, 3177, 3184, 3186, 3193, and 3196 each coordinate Zn(2+). One can recognise a (+)RNA virus helicase ATP-binding domain in the interval alanine 3264–leucine 3416. Residue glycine 3292–threonine 3299 participates in ATP binding. One can recognise a (+)RNA virus helicase C-terminal domain in the interval lysine 3417–valine 3545. Positions glutamate 3584–glutamine 3680 constitute an AV-Nsp11N/CoV-Nsp15M domain. Residues leucine 3682–phenylalanine 3804 form the NendoU domain. Residues histidine 3713, histidine 3728, and lysine 3757 contribute to the active site.

The protein belongs to the arteriviridae polyprotein family. Nsp1-alpha papain-like: Interacts with host RNF31. In terms of assembly, interacts with host EIF2AK2; this interaction occurs in host stress granules and leads to EIF2AK2 inhibition. Interacts with host G3BP1; this interaction probably plays a role in Nsp1-beta-mediated inhibition of host EIF2AK2. As to quaternary structure, interacts with host DDX18; this interaction redistributes host DDX18 to the cytoplasm. Interacts with host IFITM1. In terms of assembly, interacts with host DDX5. As to quaternary structure, interacts with host OTULIN. Interacts with host LGALS3. Specific enzymatic cleavages in vivo by its own proteases yield mature proteins. Nsp1 is autocleaved into two subunits, Nsp1-alpha and Nsp1-beta. There are two alternative pathways for processing. Either nsp4-5 is cleaved, which represents the major pathway or the nsp5-6 and nsp6-7 are processed, which represents the minor pathway. The major pathway occurs when nsp2 acts as a cofactor for nsp4.

It is found in the host nucleus. It localises to the host cytoplasm. The protein resides in the host membrane. Its subcellular location is the host endoplasmic reticulum. The protein localises to the host perinuclear region. It carries out the reaction RNA(n) + a ribonucleoside 5'-triphosphate = RNA(n+1) + diphosphate. The enzyme catalyses ATP + H2O = ADP + phosphate + H(+). It catalyses the reaction Thiol-dependent hydrolysis of ester, thioester, amide, peptide and isopeptide bonds formed by the C-terminal Gly of ubiquitin (a 76-residue protein attached to proteins as an intracellular targeting signal).. The catalysed reaction is uridylyl-uridylyl-ribonucleotide-RNA = a 3'-end uridylyl-2',3'-cyclophospho-uridine-RNA + a 5'-end dephospho-ribonucleoside-RNA. Its function is as follows. Contains the activities necessary for the transcription of negative stranded RNA, leader RNA, subgenomic mRNAs and progeny virion RNA as well as proteinases responsible for the cleavage of the polyprotein into functional products. Inhibits host IFN-beta production. Plays a role in the degradation of the host transcriptional activator CREBBP protein. The degradation of host CREBBP which is a key component of the IFN enhanceosome is likely responsible for the inhibition of interferon mediated by Nsp1-alpha. Also participates in the inhibition of host NF-kappa-B activation by counteracting LUBAC-dependent induction of NF-kappa-B. Reduces host NEMO ubiquitination by blocking the interaction between the two LUBAC complex components RNF31 and SHARPIN. In terms of biological role, plays a role in blocking host mRNA nuclear export to the cytoplasm and subversion of host protein synthesis. Additionally, inhibits the interferon-activated JAK/STAT signal transduction by mediating the ubiquitination and subsequent proteasomal degradation of host KPNA1. Repurposes the host antiviral stress granules into a proviral platform to counteract the EIF2AK2/PKR restriction, thereby regulating the host inflammatory response. Functionally, multifunctional protein that acts as a viral protease and as a viral antagonist of host immune response. Cleaves the nsp2/nsp3 site in the viral polyprotein. Displays deubiquitinating activity that cleaves both ubiquitinated and ISGylated products and therefore inhibits ubiquitin and ISG15-dependent host innate immunity. Also deubiquinates host NFKBIA, thereby interfering with NFKBIA degradation and impairing subsequent NF-kappa-B activation. Its function is as follows. Plays a role in the inhibition of the immune response by interacting with host IFITM1. This interaction leads to the proteasomal degradation of the IFN-induced antiviral protein IFITM1. Cleaves the majority of cleavage sites present in the C-terminus of the polyprotein. Triggers host apoptosis through caspase-3, -8, and -9 activations. Subverts host innate immune responses through its protease activity. Targets the NF-kappa-B essential modulator NEMO and mediates its cleavage. Blocks host interferon beta induction and downstream signaling by cleaving mitochondrial MAVS, dislodging it from the mitochondria. Impairs host defense by cleaving host mRNA-decapping enzyme DCP1A to attenuate its antiviral activity. In terms of biological role, plays a role in the initial induction of autophagosomes from host endoplasmic reticulum. Functionally, plays a role in the inhibition of host STAT3 signaling pathway by inducing the degradation of STAT3. Its function is as follows. Responsible for replication and transcription of the viral RNA genome. Displays RNA and DNA duplex-unwinding activities with 5' to 3' polarity. In terms of biological role, plays a role in viral transcription/replication and prevents the simultaneous activation of host cell dsRNA sensors, such as MDA5/IFIH1, OAS, PKR and NLRP3 inflammasome. Acts by degrading the 5'-polyuridines generated during replication of the poly(A) region of viral genomic and subgenomic RNAs. Catalyzes a two-step reaction in which a 2'3'-cyclic phosphate (2'3'-cP) is first generated by 2'-O transesterification, which is then hydrolyzed to a 3'-phosphate (3'-P). If not degraded, poly(U) RNA would hybridize with poly(A) RNA tails and activate host dsRNA sensors. Also plays a role in the inhibition of host type I interferon production by recruiting host OTULIN to promote removal of linear ubiquitination targeting host NEMO. The polypeptide is Replicase polyprotein 1ab (rep) (Porcine reproductive and respiratory syndrome virus (strain VR-2332) (PRRSV)).